The following is a 277-amino-acid chain: Large ribosomal subunit protein uL2c (277 aa).

Residues 228–254 (VDHPHGGGEGRCPVGHAQPRTPWGKPA) form a disordered region.

The protein belongs to the universal ribosomal protein uL2 family. Part of the 50S ribosomal subunit.

The protein localises to the plastid. Its subcellular location is the chloroplast. This Ostreococcus tauri protein is Large ribosomal subunit protein uL2c (rpl2).